Consider the following 198-residue polypeptide: Eukaryotic translation initiation factor isoform 4E (198 aa).

A disordered region spans residues 1–25; the sequence is MATDDVNEPLPAAAELPATEAEKQP. Ala2 is subject to N-acetylalanine. Over residues 8 to 19 the composition is skewed to low complexity; that stretch reads EPLPAAAELPAT. Residues 46–47 and 92–93 each bind mRNA; these read WG and WE. Cys97 and Cys138 are oxidised to a cystine. Position 145-152 (145-152) interacts with mRNA; that stretch reads RPQSKQDK.

It belongs to the eukaryotic initiation factor 4E family. EIF4F is a multi-subunit complex, the composition of which varies with external and internal environmental conditions. It is composed of at least EIF4A, EIF4E and EIF4G. EIF4E is also known to interact with other partners. In higher plants two isoforms of EIF4F have been identified, named isoform EIF4F and isoform EIF(iso)4F. Isoform EIF4F has subunits p220 and p26, whereas isoform EIF(iso)4F has subunits p82 and p28. This isoform interacts with the viral protein genome linked (VPg)-proteinase of turnip mosaic potyvirus. Interacts directly with LOX2. Interacts with BTF3. According to the redox status, the Cys-97-Cys-138 disulfide bridge may have a role in regulating protein function by affecting its ability to bind capped mRNA. As to expression, abundant in floral organs and in young developing tissues.

Functionally, recognizes and binds the 7-methylguanosine-containing mRNA cap during an early step in the initiation of protein synthesis and facilitates ribosome binding by inducing the unwinding of the mRNAs secondary structures. Mediates susceptibility to Turnipmosaic potyvirus (TuMV) and Tobacco etch potyvirus (TEV). The polypeptide is Eukaryotic translation initiation factor isoform 4E (EIF(ISO)4E) (Arabidopsis thaliana (Mouse-ear cress)).